We begin with the raw amino-acid sequence, 626 residues long: UvrABC system protein C (626 aa).

One can recognise a GIY-YIG domain in the interval glutamate 20–isoleucine 97. The region spanning isoleucine 207–valine 242 is the UVR domain.

This sequence belongs to the UvrC family. In terms of assembly, interacts with UvrB in an incision complex.

It localises to the cytoplasm. In terms of biological role, the UvrABC repair system catalyzes the recognition and processing of DNA lesions. UvrC both incises the 5' and 3' sides of the lesion. The N-terminal half is responsible for the 3' incision and the C-terminal half is responsible for the 5' incision. This chain is UvrABC system protein C, found in Rickettsia prowazekii (strain Madrid E).